Consider the following 326-residue polypeptide: Putative nickel insertion protein (326 aa).

This sequence belongs to the LarC family.

This Enterococcus faecalis (strain ATCC 700802 / V583) protein is Putative nickel insertion protein.